The primary structure comprises 52 residues: uncharacterized protein (52 aa).

Residues 24 to 52 (LRENPSKNVRTIPDAGDENSSFGHARVIA) form a disordered region.

This is an uncharacterized protein from Treponema pallidum (strain Nichols).